Here is a 484-residue protein sequence, read N- to C-terminus: MKLIVKTFQEITIKSRPVRKRFIRQLAKNIRAVLRDLDPELKVEGEWDNLEVETAVVDAKARREMIERLTCTPGIGHFLEVHEYPLGDFDDILAKCKAHFGDQLAGKTFAVRCKRAGKHAFTSMEVERYVGSGLRRECGAAGIDLKQPEVEVRMEIRLDRLFVIHRQHPGLGGYPLGALEQVLVLMSGGFDSTVAAYQMMRRGMISHFVFFNLGGRAHELGVMEVAHYLWEKYGRSQRVLFVSVPFEEVVGEILTKVDDSYMGVTLKRMMLRAASRVAERLELDALVTGEAISQVSSQTLPNLSVIDRVTDTLVLRPLIVSHKQDIIDTARQIGTAEFARHMPEYCGVISVNPTTQAKPYRVEHEESKFDMAVLERALERATQRTVDRVIDELGQDLQVEEVGEVLPGQIVIDIRHPDAQEDEPLALEGVEVQALPFYAINSRFKELDANRQYLLYCDKGVMSRLHAHHLLNEGHTNVRVYRPA.

A THUMP domain is found at 63 to 167 (REMIERLTCT…LDRLFVIHRQ (105 aa)). Residues 185-186 (LM), lysine 267, glycine 289, and glutamine 298 each bind ATP. Cysteine 346 and cysteine 457 are oxidised to a cystine. Residues 405 to 483 (VLPGQIVIDI…GHTNVRVYRP (79 aa)) enclose the Rhodanese domain. Cysteine 457 functions as the Cysteine persulfide intermediate in the catalytic mechanism.

This sequence belongs to the ThiI family.

The protein localises to the cytoplasm. It catalyses the reaction [ThiI sulfur-carrier protein]-S-sulfanyl-L-cysteine + a uridine in tRNA + 2 reduced [2Fe-2S]-[ferredoxin] + ATP + H(+) = [ThiI sulfur-carrier protein]-L-cysteine + a 4-thiouridine in tRNA + 2 oxidized [2Fe-2S]-[ferredoxin] + AMP + diphosphate. It carries out the reaction [ThiS sulfur-carrier protein]-C-terminal Gly-Gly-AMP + S-sulfanyl-L-cysteinyl-[cysteine desulfurase] + AH2 = [ThiS sulfur-carrier protein]-C-terminal-Gly-aminoethanethioate + L-cysteinyl-[cysteine desulfurase] + A + AMP + 2 H(+). The protein operates within cofactor biosynthesis; thiamine diphosphate biosynthesis. Catalyzes the ATP-dependent transfer of a sulfur to tRNA to produce 4-thiouridine in position 8 of tRNAs, which functions as a near-UV photosensor. Also catalyzes the transfer of sulfur to the sulfur carrier protein ThiS, forming ThiS-thiocarboxylate. This is a step in the synthesis of thiazole, in the thiamine biosynthesis pathway. The sulfur is donated as persulfide by IscS. The sequence is that of tRNA sulfurtransferase from Pseudomonas aeruginosa (strain LESB58).